The primary structure comprises 550 residues: ATP synthase subunit alpha (550 aa).

Position 172–179 (172–179) interacts with ATP; sequence GDRKTGKT. The tract at residues 521–550 is disordered; sequence EPAAEPLAGEEDRETVTRFHDDATDRPAGS. Basic and acidic residues predominate over residues 534-550; the sequence is ETVTRFHDDATDRPAGS.

The protein belongs to the ATPase alpha/beta chains family. In terms of assembly, F-type ATPases have 2 components, CF(1) - the catalytic core - and CF(0) - the membrane proton channel. CF(1) has five subunits: alpha(3), beta(3), gamma(1), delta(1), epsilon(1). CF(0) has three main subunits: a(1), b(2) and c(9-12). The alpha and beta chains form an alternating ring which encloses part of the gamma chain. CF(1) is attached to CF(0) by a central stalk formed by the gamma and epsilon chains, while a peripheral stalk is formed by the delta and b chains.

It localises to the cell membrane. It catalyses the reaction ATP + H2O + 4 H(+)(in) = ADP + phosphate + 5 H(+)(out). Functionally, produces ATP from ADP in the presence of a proton gradient across the membrane. The alpha chain is a regulatory subunit. This is ATP synthase subunit alpha from Salinispora tropica (strain ATCC BAA-916 / DSM 44818 / JCM 13857 / NBRC 105044 / CNB-440).